The chain runs to 126 residues: Aspartate 1-decarboxylase (126 aa).

Serine 25 acts as the Schiff-base intermediate with substrate; via pyruvic acid in catalysis. Residue serine 25 is modified to Pyruvic acid (Ser). Substrate is bound at residue threonine 57. The Proton donor role is filled by tyrosine 58. 73 to 75 serves as a coordination point for substrate; it reads GAA.

Belongs to the PanD family. As to quaternary structure, heterooctamer of four alpha and four beta subunits. It depends on pyruvate as a cofactor. Post-translationally, is synthesized initially as an inactive proenzyme, which is activated by self-cleavage at a specific serine bond to produce a beta-subunit with a hydroxyl group at its C-terminus and an alpha-subunit with a pyruvoyl group at its N-terminus.

Its subcellular location is the cytoplasm. The enzyme catalyses L-aspartate + H(+) = beta-alanine + CO2. Its pathway is cofactor biosynthesis; (R)-pantothenate biosynthesis; beta-alanine from L-aspartate: step 1/1. Its function is as follows. Catalyzes the pyruvoyl-dependent decarboxylation of aspartate to produce beta-alanine. The polypeptide is Aspartate 1-decarboxylase (Salmonella choleraesuis (strain SC-B67)).